A 370-amino-acid polypeptide reads, in one-letter code: Cytochrome b (370 aa).

4 consecutive transmembrane segments (helical) span residues 25 to 45 (FGSM…FLAV), 69 to 90 (WLMQ…YIHI), 105 to 125 (WLSG…GYVL), and 170 to 190 (FFAL…LHVI). The heme b site is built by His-75 and His-89. Positions 174 and 188 each coordinate heme b. His-193 lines the a ubiquinone pocket. A run of 4 helical transmembrane segments spans residues 218–238 (YKDL…VSFS), 280–300 (LGGA…PFTH), 312–332 (FMQM…WTAT), and 339–358 (FTLI…ISNP).

It belongs to the cytochrome b family. As to quaternary structure, the cytochrome bc1 complex contains 3 respiratory subunits (MT-CYB, CYC1 and UQCRFS1), 2 core proteins (UQCRC1 and UQCRC2) and probably 6 low-molecular weight proteins. Heme b serves as cofactor.

It localises to the mitochondrion inner membrane. Functionally, component of the ubiquinol-cytochrome c reductase complex (complex III or cytochrome b-c1 complex) that is part of the mitochondrial respiratory chain. The b-c1 complex mediates electron transfer from ubiquinol to cytochrome c. Contributes to the generation of a proton gradient across the mitochondrial membrane that is then used for ATP synthesis. This chain is Cytochrome b (MT-CYB), found in Eunectes murinus (Green anaconda).